We begin with the raw amino-acid sequence, 644 residues long: 1-deoxy-D-xylulose-5-phosphate synthase (644 aa).

Residues histidine 84 and 125–127 contribute to the thiamine diphosphate site; that span reads GHS. Position 156 (aspartate 156) interacts with Mg(2+). Thiamine diphosphate contacts are provided by residues 157–158, asparagine 185, tyrosine 296, and glutamate 378; that span reads GA. Residue asparagine 185 coordinates Mg(2+).

It belongs to the transketolase family. DXPS subfamily. Homodimer. Requires Mg(2+) as cofactor. It depends on thiamine diphosphate as a cofactor.

The catalysed reaction is D-glyceraldehyde 3-phosphate + pyruvate + H(+) = 1-deoxy-D-xylulose 5-phosphate + CO2. The protein operates within metabolic intermediate biosynthesis; 1-deoxy-D-xylulose 5-phosphate biosynthesis; 1-deoxy-D-xylulose 5-phosphate from D-glyceraldehyde 3-phosphate and pyruvate: step 1/1. Its function is as follows. Catalyzes the acyloin condensation reaction between C atoms 2 and 3 of pyruvate and glyceraldehyde 3-phosphate to yield 1-deoxy-D-xylulose-5-phosphate (DXP). This chain is 1-deoxy-D-xylulose-5-phosphate synthase, found in Paramagnetospirillum magneticum (strain ATCC 700264 / AMB-1) (Magnetospirillum magneticum).